A 254-amino-acid chain; its full sequence is Cell division protein ZapD (254 aa).

It belongs to the ZapD family. In terms of assembly, interacts with FtsZ.

Its subcellular location is the cytoplasm. Its function is as follows. Cell division factor that enhances FtsZ-ring assembly. Directly interacts with FtsZ and promotes bundling of FtsZ protofilaments, with a reduction in FtsZ GTPase activity. The chain is Cell division protein ZapD from Idiomarina loihiensis (strain ATCC BAA-735 / DSM 15497 / L2-TR).